We begin with the raw amino-acid sequence, 357 residues long: Protein-glutamate methylesterase/protein-glutamine glutaminase 1 (357 aa).

Positions 7 to 125 constitute a Response regulatory domain; it reads RAVIIDDSLL…QFDPEEIGNI (119 aa). D58 carries the post-translational modification 4-aspartylphosphate. The CheB-type methylesterase domain maps to 162 to 344; it reads KKSPIQAICI…VEYIEPVTEI (183 aa). Active-site residues include S174, H201, and D297.

This sequence belongs to the CheB family. In terms of processing, phosphorylated by CheA. Phosphorylation of the N-terminal regulatory domain activates the methylesterase activity.

The protein localises to the cytoplasm. It catalyses the reaction [protein]-L-glutamate 5-O-methyl ester + H2O = L-glutamyl-[protein] + methanol + H(+). The catalysed reaction is L-glutaminyl-[protein] + H2O = L-glutamyl-[protein] + NH4(+). In terms of biological role, involved in chemotaxis. Part of a chemotaxis signal transduction system that modulates chemotaxis in response to various stimuli. Catalyzes the demethylation of specific methylglutamate residues introduced into the chemoreceptors (methyl-accepting chemotaxis proteins or MCP) by CheR. Also mediates the irreversible deamidation of specific glutamine residues to glutamic acid. The chain is Protein-glutamate methylesterase/protein-glutamine glutaminase 1 from Leptospira interrogans serogroup Icterohaemorrhagiae serovar Lai (strain 56601).